We begin with the raw amino-acid sequence, 111 residues long: Large ribosomal subunit protein uL24 (111 aa).

The protein belongs to the universal ribosomal protein uL24 family. In terms of assembly, part of the 50S ribosomal subunit.

One of two assembly initiator proteins, it binds directly to the 5'-end of the 23S rRNA, where it nucleates assembly of the 50S subunit. In terms of biological role, one of the proteins that surrounds the polypeptide exit tunnel on the outside of the subunit. The sequence is that of Large ribosomal subunit protein uL24 from Myxococcus xanthus (strain DK1622).